The following is a 108-amino-acid chain: UPF0145 protein Fnod_0426 (108 aa).

It belongs to the UPF0145 family.

The polypeptide is UPF0145 protein Fnod_0426 (Fervidobacterium nodosum (strain ATCC 35602 / DSM 5306 / Rt17-B1)).